Here is a 734-residue protein sequence, read N- to C-terminus: Subtilisin-like protease SBT3.2 (734 aa).

The N-terminal stretch at 1-19 (MTRALILVAICLMLTLNNA) is a signal peptide. The propeptide at 20–88 (AETKVHIVYL…ESTLRFYELQ (69 aa)) is activation peptide. The Peptidase S8 domain occupies 92 to 581 (TWDYLQHTSK…GGVVNSEKAA (490 aa)). A glycan (N-linked (GlcNAc...) asparagine) is linked at asparagine 108. The Charge relay system role is filled by aspartate 122. A glycan (N-linked (GlcNAc...) asparagine) is linked at asparagine 143. The active-site Charge relay system is the histidine 179. N-linked (GlcNAc...) asparagine glycosylation is found at asparagine 326 and asparagine 355. Residues 361 to 438 (VCEDLAKNPA…ELGTDILFYI (78 aa)) form the PA domain. Asparagine 497 is a glycosylation site (N-linked (GlcNAc...) asparagine). The Charge relay system role is filled by serine 512. A glycan (N-linked (GlcNAc...) asparagine) is linked at asparagine 669.

It belongs to the peptidase S8 family.

The protein resides in the secreted. This chain is Subtilisin-like protease SBT3.2, found in Arabidopsis thaliana (Mouse-ear cress).